The primary structure comprises 749 residues: Patatin-like phospholipase domain-containing protein An01g04180 (749 aa).

A disordered region spans residues 1–21 (MNGAEKSAAGDTYDPSTIPDY). The helical transmembrane segment at 87-107 (WPFLFTVFGWITALAFAYTLT) threads the bilayer. Positions 277–468 (LCLSGGATFA…RTDIPIKALN (192 aa)) constitute a PNPLA domain. The GXSXG signature appears at 308–312 (GTSGG). The Nucleophile role is filled by Ser310. Asp455 functions as the Proton acceptor in the catalytic mechanism. The tract at residues 619–726 (AGGRPISPAP…STGSSIFEEV (108 aa)) is disordered. Residues 649–664 (PLNERLDHNLPERRGD) show a composition bias toward basic and acidic residues. The span at 685 to 707 (SLSENSSNESAARPSSSSSSSRL) shows a compositional bias: low complexity.

Belongs to the PLPL family.

The protein localises to the membrane. Functionally, probable lipid hydrolase. The protein is Patatin-like phospholipase domain-containing protein An01g04180 of Aspergillus niger (strain ATCC MYA-4892 / CBS 513.88 / FGSC A1513).